Here is a 1328-residue protein sequence, read N- to C-terminus: Tubulin polyglutamylase TTLL5 (1328 aa).

Residues 1-22 (MPVVMARDLEETASSSEDEDLA) form a disordered region. One can recognise a TTL domain in the interval 62-407 (RYHLSYKIVR…VCQDPAQRTS (346 aa)). ATP is bound by residues K180, 186-187 (RG), 208-211 (SRYI), and 221-223 (KFD). R186 is an a protein binding site. R247 lines the L-glutamate pocket. ATP is bound at residue 268 to 269 (TN). 3 residues coordinate L-glutamate: Y270, S271, and K293. Residues D353, E366, and N368 each coordinate Mg(2+). The interval 378 to 488 (PLDLKIKASM…RGGFIRIFPT (111 aa)) is c-MTBD region. K384 is an L-glutamate binding site. Disordered stretches follow at residues 411-436 (IYPSFESSRRNPFQKPQRTRPLSASD), 585-631 (AQPA…QAKY), 834-853 (HSKSSKNSSSYSDSGAKGDH), 948-975 (PALLLSPVPDNAPPSIHSGTQNVSPAGL), 1006-1032 (SSAKAAGSCHPHKHHSGIAKTQKEGED), 1085-1129 (RSSA…LQTG), and 1212-1271 (RISS…QLNG). A compositionally biased stretch (polar residues) spans 420-432 (RNPFQKPQRTRPL). Acidic residues predominate over residues 597 to 617 (ESEEEEEVGLDNDDEEQEASQ). Low complexity predominate over residues 838–847 (SKNSSSYSDS). Polar residues-rich tracts occupy residues 1116 to 1128 (THSSPPGSRSLQT), 1214 to 1227 (SSATTGGQKPNTLP), 1234 to 1248 (PNSSTLVSKPASNHK), and 1257 to 1271 (QRASKGSSAEGQLNG).

Belongs to the tubulin--tyrosine ligase family. As to quaternary structure, interacts with the transcriptional coactivators NCOA1/SRC-1 and NCOA2/TIF2. Mg(2+) is required as a cofactor. As to expression, highly expressed in brain, kidney, liver, spleen and testis. Expressed in heart, lung, muscle and trachea.

It is found in the cell projection. It localises to the cilium. Its subcellular location is the cytoplasm. The protein localises to the cytoskeleton. The protein resides in the cilium basal body. It is found in the nucleus. The enzyme catalyses L-glutamyl-[protein] + L-glutamate + ATP = gamma-L-glutamyl-L-glutamyl-[protein] + ADP + phosphate + H(+). The catalysed reaction is (L-glutamyl)(n)-gamma-L-glutamyl-L-glutamyl-[protein] + L-glutamate + ATP = (L-glutamyl)(n+1)-gamma-L-glutamyl-L-glutamyl-[protein] + ADP + phosphate + H(+). Polyglutamylase which modifies tubulin, generating polyglutamate side chains on the gamma-carboxyl group of specific glutamate residues within the C-terminal tail of tubulin. Preferentially mediates ATP-dependent initiation step of the polyglutamylation reaction over the elongation step. Preferentially modifies the alpha-tubulin tail over a beta-tail. Required for CCSAP localization to both polyglutamylated spindle and cilia microtubules. Increases the effects of transcriptional coactivator NCOA2/TIF2 in glucocorticoid receptor-mediated repression and induction and in androgen receptor-mediated induction. This chain is Tubulin polyglutamylase TTLL5, found in Mus musculus (Mouse).